Consider the following 214-residue polypeptide: RING-H2 finger protein ATL67 (214 aa).

Residues 33 to 53 (LGFGYSIAIALGFLVLLSTVL) form a helical membrane-spanning segment. The RING-type; atypical zinc finger occupies 138-180 (CSICLCEYKEAEMLRMMPECKHYFHLCCLDAWLKLNGSCPVCR).

This sequence belongs to the RING-type zinc finger family. ATL subfamily.

The protein localises to the membrane. The enzyme catalyses S-ubiquitinyl-[E2 ubiquitin-conjugating enzyme]-L-cysteine + [acceptor protein]-L-lysine = [E2 ubiquitin-conjugating enzyme]-L-cysteine + N(6)-ubiquitinyl-[acceptor protein]-L-lysine.. The protein operates within protein modification; protein ubiquitination. The chain is RING-H2 finger protein ATL67 (ATL67) from Arabidopsis thaliana (Mouse-ear cress).